A 428-amino-acid polypeptide reads, in one-letter code: Septin homolog spn7 (428 aa).

In terms of domain architecture, Septin-type G spans 15-290; it reads KGKKLRIMVA…ENYRTEKLSN (276 aa). The G1 motif stretch occupies residues 25–32; it reads GSSYTSYQ. Residues 25-32, Gly86, 166-174, and Gly224 each bind GTP; these read GSSYTSYQ and NSNAFTEEE. The G3 motif stretch occupies residues 83-86; that stretch reads EVNG. The interval 165-168 is G4 motif; that stretch reads GNSN. 2 disordered regions span residues 287 to 345 and 387 to 414; these read KLSN…SEEL and KEFPHRTTSSRNSLPNNTTKELEMKKMD. A compositionally biased stretch (polar residues) spans 290–307; that stretch reads NDSPSNTSLSLQKQNSIV. Positions 309–325 are enriched in basic and acidic residues; sequence NEDKRSVNGSERTETRS. 2 stretches are compositionally biased toward polar residues: residues 326–339 and 392–405; these read SIDQSEMRTNVSDS and RTTSSRNSLPNNTT.

It belongs to the TRAFAC class TrmE-Era-EngA-EngB-Septin-like GTPase superfamily. Septin GTPase family. Component of the sporulation-specific septin complex composed of at least spn2, spn5, spn6 and spn7.

The protein resides in the cytoplasm. It localises to the nucleus. The protein localises to the forespore membrane. Its function is as follows. Septin-like protein involved in the correct orientation of forespore membrane extension during sporulation. Binds phosphatidylinositol 4-phosphate. This chain is Septin homolog spn7 (spn7), found in Schizosaccharomyces pombe (strain 972 / ATCC 24843) (Fission yeast).